A 538-amino-acid polypeptide reads, in one-letter code: Calcyphosin-2 (538 aa).

Over residues R134 to K146 the composition is skewed to polar residues. Residues R134–D154 are disordered. EF-hand domains follow at residues R426–E461, V462–E497, and Y498–S533. D439, N443, D450, N477, N479, K481, E486, D511, N513, S515, S517, and N522 together coordinate Ca(2+).

As to expression, abundantly expressed in many tissues. Expressed in brain, colon, heart, kidney, liver, lung, liver, pancreas, placenta, skeletal muscle, testis and thymus. Highest expression in colon, testis, lung, placenta and brain.

The chain is Calcyphosin-2 from Homo sapiens (Human).